Here is a 341-residue protein sequence, read N- to C-terminus: tRNA N6-adenosine threonylcarbamoyltransferase (341 aa).

Fe cation contacts are provided by His-115 and His-119. Substrate-binding positions include 137–141 (IVSGG), Asp-170, Gly-183, Asp-187, and Asn-276. Position 304 (Asp-304) interacts with Fe cation.

Belongs to the KAE1 / TsaD family. Requires Fe(2+) as cofactor.

The protein resides in the cytoplasm. It carries out the reaction L-threonylcarbamoyladenylate + adenosine(37) in tRNA = N(6)-L-threonylcarbamoyladenosine(37) in tRNA + AMP + H(+). Its function is as follows. Required for the formation of a threonylcarbamoyl group on adenosine at position 37 (t(6)A37) in tRNAs that read codons beginning with adenine. Is involved in the transfer of the threonylcarbamoyl moiety of threonylcarbamoyl-AMP (TC-AMP) to the N6 group of A37, together with TsaE and TsaB. TsaD likely plays a direct catalytic role in this reaction. The protein is tRNA N6-adenosine threonylcarbamoyltransferase of Staphylococcus aureus (strain MRSA252).